The chain runs to 450 residues: tRNA modification GTPase MnmE (450 aa).

(6S)-5-formyl-5,6,7,8-tetrahydrofolate-binding residues include K21, E78, and K117. The 164-residue stretch at 213-376 folds into the TrmE-type G domain; that stretch reads GHALSIVGKP…LSQKISAFFP (164 aa). Residue N223 participates in K(+) binding. GTP-binding positions include 223 to 228, 242 to 248, and 267 to 270; these read NAGKSS, SDIKGTT, and DTAG. S227 serves as a coordination point for Mg(2+). Residues S242, I244, and T247 each coordinate K(+). Residue T248 coordinates Mg(2+). K450 serves as a coordination point for (6S)-5-formyl-5,6,7,8-tetrahydrofolate.

It belongs to the TRAFAC class TrmE-Era-EngA-EngB-Septin-like GTPase superfamily. TrmE GTPase family. As to quaternary structure, homodimer. Heterotetramer of two MnmE and two MnmG subunits. It depends on K(+) as a cofactor.

The protein resides in the cytoplasm. Functionally, exhibits a very high intrinsic GTPase hydrolysis rate. Involved in the addition of a carboxymethylaminomethyl (cmnm) group at the wobble position (U34) of certain tRNAs, forming tRNA-cmnm(5)s(2)U34. The protein is tRNA modification GTPase MnmE of Helicobacter pylori (strain Shi470).